A 376-amino-acid chain; its full sequence is N-acetyldiaminopimelate deacetylase (376 aa).

The active site involves Asp69. The active-site Proton acceptor is the Glu128.

The protein belongs to the peptidase M20A family. N-acetyldiaminopimelate deacetylase subfamily.

It carries out the reaction N-acetyl-(2S,6S)-2,6-diaminopimelate + H2O = (2S,6S)-2,6-diaminopimelate + acetate. The protein operates within amino-acid biosynthesis; L-lysine biosynthesis via DAP pathway; LL-2,6-diaminopimelate from (S)-tetrahydrodipicolinate (acetylase route): step 3/3. In terms of biological role, catalyzes the conversion of N-acetyl-diaminopimelate to diaminopimelate and acetate. This is N-acetyldiaminopimelate deacetylase from Streptococcus pneumoniae (strain P1031).